A 665-amino-acid chain; its full sequence is Fructose-1,6-bisphosphatase class 3 (665 aa).

Belongs to the FBPase class 3 family. Mn(2+) is required as a cofactor.

It catalyses the reaction beta-D-fructose 1,6-bisphosphate + H2O = beta-D-fructose 6-phosphate + phosphate. It functions in the pathway carbohydrate biosynthesis; gluconeogenesis. This is Fructose-1,6-bisphosphatase class 3 from Clostridium novyi (strain NT).